The following is a 262-amino-acid chain: Aminoglycoside (3'') (9) adenylyltransferase (262 aa).

The enzyme catalyses streptomycin + ATP = 3''-O-adenylylstreptomycin + diphosphate. The catalysed reaction is spectinomycin + ATP = 9-O-adenylylspectinomycin + diphosphate. Functionally, mediates bacterial resistance to the antibiotics streptomycin and spectinomycin. This is Aminoglycoside (3'') (9) adenylyltransferase from Shigella flexneri.